The sequence spans 553 residues: NAD(P)H-quinone oxidoreductase chain 4 2 (553 aa).

14 consecutive transmembrane segments (helical) span residues 6-26 (FPWL…IPVI), 34-54 (VRWF…YVFL), 87-107 (ISAP…LAAW), 115-135 (LFYF…VAQD), 136-156 (LLLF…LVSI), 169-189 (FLLY…AMAL), 210-230 (ALEL…LAIF), 244-264 (SAPV…YGLI), 276-296 (IYFA…GAFA), 312-332 (VSHM…GISG), 333-353 (AMLQ…LAGV), 376-396 (VFAL…MSGF), 418-438 (VVTV…LLSM), and 487-507 (IFIA…PQLA).

This sequence belongs to the complex I subunit 4 family.

It localises to the cellular thylakoid membrane. The catalysed reaction is a plastoquinone + NADH + (n+1) H(+)(in) = a plastoquinol + NAD(+) + n H(+)(out). It carries out the reaction a plastoquinone + NADPH + (n+1) H(+)(in) = a plastoquinol + NADP(+) + n H(+)(out). NDH-1 shuttles electrons from NAD(P)H, via FMN and iron-sulfur (Fe-S) centers, to quinones in the respiratory chain. The immediate electron acceptor for the enzyme in this species is believed to be plastoquinone. Couples the redox reaction to proton translocation (for every two electrons transferred, four hydrogen ions are translocated across the cytoplasmic membrane), and thus conserves the redox energy in a proton gradient. This Microcystis aeruginosa (strain NIES-843 / IAM M-2473) protein is NAD(P)H-quinone oxidoreductase chain 4 2.